The primary structure comprises 132 residues: Fatty acid-binding protein 12 (132 aa).

A fatty acid-binding positions include Arg-107 and 127–129; that span reads RTY.

This sequence belongs to the calycin superfamily. Fatty-acid binding protein (FABP) family. In terms of tissue distribution, highly expressed in adult retina and testis with lower levels in cerebral cortex, kidney and epididymis. In the retina, strongly expressed in the ganglion cell layer and throughout the inner nuclear layer in amacrine and bipolar cells. Not expressed in the outer nuclear layer. In the testis, detected in the seminiferous tubules.

Functionally, may play a role in lipid transport. The sequence is that of Fatty acid-binding protein 12 from Rattus norvegicus (Rat).